A 305-amino-acid polypeptide reads, in one-letter code: DNA-directed RNA polymerase 35 kDa subunit (305 aa).

This sequence belongs to the poxviridae DNA-directed RNA polymerase 35 kDa subunit family. The DNA-dependent RNA polymerase used for intermediate and late genes expression consists of eight subunits 147 kDa, 133 kDa, 35 kDa, 30 kDa, 22 kDa, 19 kDa, 18 kDa and 7 kDa totalling more than 500 kDa in mass. The same holoenzyme, with the addition of the transcription-specificity factor RAP94, is used for early gene expression.

Its subcellular location is the virion. The catalysed reaction is RNA(n) + a ribonucleoside 5'-triphosphate = RNA(n+1) + diphosphate. In terms of biological role, part of the DNA-dependent RNA polymerase which catalyzes the transcription of viral DNA into RNA using the four ribonucleoside triphosphates as substrates. Responsible for the transcription of early, intermediate and late genes. DNA-dependent RNA polymerase associates with the early transcription factor (ETF), itself composed of D6 and A7, thereby allowing the early genes transcription. Late transcription, and probably also intermediate transcription, require newly synthesized RNA polymerase. The polypeptide is DNA-directed RNA polymerase 35 kDa subunit (OPG156) (Bos taurus (Bovine)).